The sequence spans 260 residues: MATAPSPREENVYLAKLAEQAERYEEMVEFMEKVCAAADSEELTVEERNLLSVAYKNVIGARRASWRIISSIEQKEESRGNDDHVSTIRDYRSKIETELSNICGGILKLLDSRLIPSAASGDSKVFYLKMKGDYHRYLAEFKTGAERKEAAESTLSAYKAAQDIANAELAPTHPIRLGLALNFSVFYYEILNSPDRACNLANEAFDEAIAELDTLEEESYKDSTLIMQLLRDNLTLWTSDMQDDGGDEIKEAAPKPDEQY.

The segment at 240–260 (DMQDDGGDEIKEAAPKPDEQY) is disordered. The segment covering 247 to 260 (DEIKEAAPKPDEQY) has biased composition (basic and acidic residues).

This sequence belongs to the 14-3-3 family.

The polypeptide is 14-3-3-like protein (Oenothera elata subsp. hookeri (Hooker's evening primrose)).